The sequence spans 250 residues: UPF0259 membrane protein PC1_1998 (250 aa).

6 consecutive transmembrane segments (helical) span residues 20-40 (FISILMMSLLTAFITVILNHA), 90-110 (FAALVGNVLLTGGVLMLIQLV), 132-152 (LLFLILLCTLLIQLGMMLLVI), 156-176 (LLAIALSLSPVIVVTEKSGIF), 192-212 (ATAPAIVMWLLAKIAILLVVS), and 222-242 (LGVVLNGLSNLISAILLIYLF).

The protein belongs to the UPF0259 family.

The protein resides in the cell inner membrane. This Pectobacterium carotovorum subsp. carotovorum (strain PC1) protein is UPF0259 membrane protein PC1_1998.